The chain runs to 138 residues: Ribulose bisphosphate carboxylase small subunit (138 aa).

The protein belongs to the RuBisCO small chain family. Heterohexadecamer of 8 large and 8 small subunits.

The protein localises to the plastid. The protein resides in the chloroplast. In terms of biological role, ruBisCO catalyzes two reactions: the carboxylation of D-ribulose 1,5-bisphosphate, the primary event in carbon dioxide fixation, as well as the oxidative fragmentation of the pentose substrate in the photorespiration process. Both reactions occur simultaneously and in competition at the same active site. Although the small subunit is not catalytic it is essential for maximal activity. This Pyropia suborbiculata (Red alga) protein is Ribulose bisphosphate carboxylase small subunit.